The sequence spans 620 residues: 1-deoxy-D-xylulose-5-phosphate synthase (620 aa).

Thiamine diphosphate is bound by residues His-80 and 121-123 (GHS). Asp-152 is a binding site for Mg(2+). Residues 153-154 (GA), Asn-181, Tyr-288, and Glu-370 contribute to the thiamine diphosphate site. Asn-181 provides a ligand contact to Mg(2+).

It belongs to the transketolase family. DXPS subfamily. As to quaternary structure, homodimer. Mg(2+) serves as cofactor. Requires thiamine diphosphate as cofactor.

It catalyses the reaction D-glyceraldehyde 3-phosphate + pyruvate + H(+) = 1-deoxy-D-xylulose 5-phosphate + CO2. Its pathway is metabolic intermediate biosynthesis; 1-deoxy-D-xylulose 5-phosphate biosynthesis; 1-deoxy-D-xylulose 5-phosphate from D-glyceraldehyde 3-phosphate and pyruvate: step 1/1. Catalyzes the acyloin condensation reaction between C atoms 2 and 3 of pyruvate and glyceraldehyde 3-phosphate to yield 1-deoxy-D-xylulose-5-phosphate (DXP). The chain is 1-deoxy-D-xylulose-5-phosphate synthase from Escherichia coli O127:H6 (strain E2348/69 / EPEC).